We begin with the raw amino-acid sequence, 349 residues long: GMP reductase (349 aa).

108–131 (LDFFKIKKIFSLSSELKYICIDVA) is a binding site for NADP(+). Residues glycine 181 and glycine 183 each coordinate K(+). Catalysis depends on cysteine 186, which acts as the Thioimidate intermediate. NADP(+) is bound at residue 216-239 (IISDGGCTVSGDIAKAFGGGADFV).

This sequence belongs to the IMPDH/GMPR family. GuaC type 1 subfamily. As to quaternary structure, homotetramer.

The catalysed reaction is IMP + NH4(+) + NADP(+) = GMP + NADPH + 2 H(+). Functionally, catalyzes the irreversible NADPH-dependent deamination of GMP to IMP. It functions in the conversion of nucleobase, nucleoside and nucleotide derivatives of G to A nucleotides, and in maintaining the intracellular balance of A and G nucleotides. This chain is GMP reductase, found in Buchnera aphidicola subsp. Schizaphis graminum (strain Sg).